An 86-amino-acid polypeptide reads, in one-letter code: Cytochrome c6 (86 aa).

Heme c contacts are provided by cysteine 14, cysteine 17, histidine 18, and methionine 58.

This sequence belongs to the cytochrome c family. PetJ subfamily. As to quaternary structure, monomer. Binds 1 heme c group covalently per subunit.

Its subcellular location is the plastid. It localises to the chloroplast thylakoid lumen. Functionally, functions as an electron carrier between membrane-bound cytochrome b6-f and photosystem I in oxygenic photosynthesis. In Alaria esculenta (Irish wakame), this protein is Cytochrome c6 (petJ).